The chain runs to 176 residues: Ribosome maturation factor RimM (176 aa).

The region spanning Asp93–Leu168 is the PRC barrel domain.

Belongs to the RimM family. As to quaternary structure, binds ribosomal protein uS19.

The protein resides in the cytoplasm. Its function is as follows. An accessory protein needed during the final step in the assembly of 30S ribosomal subunit, possibly for assembly of the head region. Essential for efficient processing of 16S rRNA. May be needed both before and after RbfA during the maturation of 16S rRNA. It has affinity for free ribosomal 30S subunits but not for 70S ribosomes. This is Ribosome maturation factor RimM from Oleidesulfovibrio alaskensis (strain ATCC BAA-1058 / DSM 17464 / G20) (Desulfovibrio alaskensis).